We begin with the raw amino-acid sequence, 510 residues long: Beta-glucosidase 12 (510 aa).

An N-terminal signal peptide occupies residues 1–24; it reads MAAAGAMPGGLLLTFLLLAVVASG. Position 53 (Gln53) interacts with a beta-D-glucoside. Asn122 is a glycosylation site (N-linked (GlcNAc...) asparagine). Residues His157 and 202–203 contribute to the a beta-D-glucoside site; that span reads NE. The active-site Proton donor is the Glu203. Intrachain disulfides connect Cys208–Cys243 and Cys222–Cys230. The N-linked (GlcNAc...) asparagine glycan is linked to Asn229. Tyr346 is an a beta-D-glucoside binding site. 2 N-linked (GlcNAc...) asparagine glycosylation sites follow: Asn361 and Asn371. Residue Glu417 participates in a beta-D-glucoside binding. Catalysis depends on Glu417, which acts as the Nucleophile. Asn425 carries N-linked (GlcNAc...) asparagine glycosylation. A beta-D-glucoside contacts are provided by residues Trp466, 473-474, and Phe482; that span reads EW.

The protein belongs to the glycosyl hydrolase 1 family.

It is found in the secreted. The catalysed reaction is Hydrolysis of terminal, non-reducing beta-D-glucosyl residues with release of beta-D-glucose.. Functionally, hydrolyzes p-nitrophenyl beta-D-glucoside, p-nitrophenyl beta-D-galactoside, p-nitrophenyl beta-D-xyloside, p-nitrophenyl beta-D-fucoside, p-nitrophenyl beta-L-arabinoside, cello-oligosaccharides and laminaribiose. The polypeptide is Beta-glucosidase 12 (Oryza sativa subsp. indica (Rice)).